Reading from the N-terminus, the 1071-residue chain is SLIT-ROBO Rho GTPase-activating protein 2 (1071 aa).

The F-BAR domain occupies K22–D325. Positions L181–T203 are enriched in basic and acidic residues. Residues L181–A211 are disordered. S206 is modified (phosphoserine). Positions V362–I401 form a coiled coil. 4 positions are modified to phosphoserine: S427, S500, S691, and S695. One can recognise a Rho-GAP domain in the interval A489–F679. The segment at D698–D726 is disordered. Over residues G705–V717 the composition is skewed to polar residues. Residue S724 is modified to Phosphoserine. Residues C728–T787 form the SH3 domain. A Phosphoserine modification is found at S795. Residues Q837–P936 form a disordered region. Residues H855–S866 show a composition bias toward low complexity. Composition is skewed to polar residues over residues R874–L885 and G897–H907. S916 is subject to Phosphoserine. The span at I919–N933 shows a compositional bias: polar residues. The residue at position 927 (R927) is a Symmetric dimethylarginine; by PRMT5. Phosphoserine is present on S930. Residues E940–K967 adopt a coiled-coil conformation. Residues S983–A1012 form a disordered region. 4 positions are modified to phosphoserine: S990, S994, S1013, and S1027. The segment at K1029–V1071 is disordered. Polar residues predominate over residues P1047–V1071.

In terms of assembly, homodimer. Heterodimer; forms a heterodimer with SRGAP2C, altering SRGAP2 function. Forms a heterooligomer with SRGAP1 and SRGAP3 through its F-BAR domain. Interacts (via SH3 domain) with GPHN. Interacts (via SH3 domain) with FMNL1 (activated by RAC1); regulates the actin filament severing activity of FMNL1 and actin dynamics. Interacts (via SH3 domain) with FMNL3. Interacts with RAC1; specifically stimulates RAC1 GTPase activity. Interacts (via F-BAR domain) with HOMER1. Interacts with ROBO1 and ROBO2. Interacts with FASLG. Interacts with PRMT5. Methylation at Arg-927 is required for the stimulation of cell migration, dimerization and localization at the plasma membrane protrusions.

It is found in the cell membrane. The protein resides in the cell projection. The protein localises to the dendritic spine. Its subcellular location is the postsynaptic density. It localises to the postsynaptic cell membrane. It is found in the lamellipodium. The protein resides in the cytoplasmic vesicle. The protein localises to the phagosome. Its subcellular location is the nucleus. It localises to the cytoplasm. It is found in the cytosol. Activity is strongly inhibited by SRGAP2C, which heterodimerize with SRGAP2/SRGAP2A, thereby reducing SRGAP2/SRGAP2A levels through proteasome-dependent degradation. In terms of biological role, postsynaptic RAC1 GTPase activating protein (GAP) that plays a key role in neuronal morphogenesis and migration mainly during development of the cerebral cortex. Regulates excitatory and inhibitory synapse maturation and density in cortical pyramidal neurons. SRGAP2/SRGAP2A limits excitatory and inhibitory synapse density through its RAC1-specific GTPase activating activity, while it promotes maturation of both excitatory and inhibitory synapses through its ability to bind to the postsynaptic scaffolding protein HOMER1 at excitatory synapses, and the postsynaptic protein GPHN at inhibitory synapses. Mechanistically, acts by binding and deforming membranes, thereby regulating actin dynamics to regulate cell migration and differentiation. Promotes cell repulsion and contact inhibition of locomotion: localizes to protrusions with curved edges and controls the duration of RAC1 activity in contact protrusions. In non-neuronal cells, may also play a role in cell migration by regulating the formation of lamellipodia and filopodia. This Homo sapiens (Human) protein is SLIT-ROBO Rho GTPase-activating protein 2.